Here is a 458-residue protein sequence, read N- to C-terminus: Adenylosuccinate synthetase (458 aa).

GTP-binding positions include G17–K23 and G45–T47. The Proton acceptor role is filled by D18. The Mg(2+) site is built by D18 and G45. Residues D18–K21, N43–H46, T137, R151, Q247, T262, and R330 contribute to the IMP site. Residue H46 is the Proton donor of the active site. Residue V326–R332 coordinates substrate. Residues R332, K358 to D360, and S440 to S442 contribute to the GTP site.

This sequence belongs to the adenylosuccinate synthetase family. As to quaternary structure, homodimer. Mg(2+) serves as cofactor.

The protein localises to the cytoplasm. It carries out the reaction IMP + L-aspartate + GTP = N(6)-(1,2-dicarboxyethyl)-AMP + GDP + phosphate + 2 H(+). The protein operates within purine metabolism; AMP biosynthesis via de novo pathway; AMP from IMP: step 1/2. Its function is as follows. Plays an important role in the de novo pathway of purine nucleotide biosynthesis. Catalyzes the first committed step in the biosynthesis of AMP from IMP. The chain is Adenylosuccinate synthetase from Delftia acidovorans (strain DSM 14801 / SPH-1).